Here is a 482-residue protein sequence, read N- to C-terminus: Vanillin dehydrogenase (482 aa).

NAD(+) is bound at residue 228–233 (GSTHVG). Active-site residues include Glu-250 and Cys-284.

It belongs to the aldehyde dehydrogenase family.

The catalysed reaction is vanillin + NAD(+) + H2O = vanillate + NADH + 2 H(+). In terms of biological role, catalyzes the NAD-dependent oxidation of vanillin to vanillic acid. This chain is Vanillin dehydrogenase (vdh), found in Pseudomonas fluorescens.